The chain runs to 160 residues: Ribosomal RNA large subunit methyltransferase H (160 aa).

S-adenosyl-L-methionine-binding residues include leucine 76 and glycine 108.

Belongs to the RNA methyltransferase RlmH family. In terms of assembly, homodimer.

The protein localises to the cytoplasm. The enzyme catalyses pseudouridine(1915) in 23S rRNA + S-adenosyl-L-methionine = N(3)-methylpseudouridine(1915) in 23S rRNA + S-adenosyl-L-homocysteine + H(+). Specifically methylates the pseudouridine at position 1915 (m3Psi1915) in 23S rRNA. The protein is Ribosomal RNA large subunit methyltransferase H of Rhodopseudomonas palustris (strain HaA2).